The primary structure comprises 425 residues: GTPase Obg (425 aa).

The 158-residue stretch at 1–158 (MFIDKAKIYV…REIILELKLL (158 aa)) folds into the Obg domain. The region spanning 159–331 (ADVGLVGFPN…LMAEVSKTLA (173 aa)) is the OBG-type G domain. GTP contacts are provided by residues 165–172 (GFPNVGKS), 190–194 (FTTLK), 212–215 (DIPG), 282–285 (NKSD), and 312–314 (SAA). 2 residues coordinate Mg(2+): Ser172 and Thr192. The 81-residue stretch at 345–425 (LFIPEEKRFT…LNDFEFEFVI (81 aa)) folds into the OCT domain.

Belongs to the TRAFAC class OBG-HflX-like GTPase superfamily. OBG GTPase family. As to quaternary structure, monomer. Requires Mg(2+) as cofactor.

The protein localises to the cytoplasm. Functionally, an essential GTPase which binds GTP, GDP and possibly (p)ppGpp with moderate affinity, with high nucleotide exchange rates and a fairly low GTP hydrolysis rate. Plays a role in control of the cell cycle, stress response, ribosome biogenesis and in those bacteria that undergo differentiation, in morphogenesis control. This chain is GTPase Obg, found in Clostridium tetani (strain Massachusetts / E88).